The following is a 473-amino-acid chain: tRNA-2-methylthio-N(6)-dimethylallyladenosine synthase (473 aa).

An MTTase N-terminal domain is found at 3-120; it reads MKLHVKTWGC…LPEMIKEVQE (118 aa). 6 residues coordinate [4Fe-4S] cluster: cysteine 12, cysteine 49, cysteine 83, cysteine 157, cysteine 161, and cysteine 164. The Radical SAM core domain maps to 143 to 375; it reads KADGATAFVS…QDRIQQQSQG (233 aa). The TRAM domain occupies 378–441; sequence RKMVGSVQRI…TNSIRGKFIR (64 aa).

It belongs to the methylthiotransferase family. MiaB subfamily. Monomer. The cofactor is [4Fe-4S] cluster.

It localises to the cytoplasm. It carries out the reaction N(6)-dimethylallyladenosine(37) in tRNA + (sulfur carrier)-SH + AH2 + 2 S-adenosyl-L-methionine = 2-methylsulfanyl-N(6)-dimethylallyladenosine(37) in tRNA + (sulfur carrier)-H + 5'-deoxyadenosine + L-methionine + A + S-adenosyl-L-homocysteine + 2 H(+). Functionally, catalyzes the methylthiolation of N6-(dimethylallyl)adenosine (i(6)A), leading to the formation of 2-methylthio-N6-(dimethylallyl)adenosine (ms(2)i(6)A) at position 37 in tRNAs that read codons beginning with uridine. This Psychromonas ingrahamii (strain DSM 17664 / CCUG 51855 / 37) protein is tRNA-2-methylthio-N(6)-dimethylallyladenosine synthase.